We begin with the raw amino-acid sequence, 443 residues long: Exodeoxyribonuclease 7 large subunit (443 aa).

This sequence belongs to the XseA family. Heterooligomer composed of large and small subunits.

It localises to the cytoplasm. It catalyses the reaction Exonucleolytic cleavage in either 5'- to 3'- or 3'- to 5'-direction to yield nucleoside 5'-phosphates.. Bidirectionally degrades single-stranded DNA into large acid-insoluble oligonucleotides, which are then degraded further into small acid-soluble oligonucleotides. The protein is Exodeoxyribonuclease 7 large subunit of Legionella pneumophila (strain Lens).